A 185-amino-acid chain; its full sequence is Imidazoleglycerol-phosphate dehydratase (185 aa).

Belongs to the imidazoleglycerol-phosphate dehydratase family.

Its subcellular location is the cytoplasm. The enzyme catalyses D-erythro-1-(imidazol-4-yl)glycerol 3-phosphate = 3-(imidazol-4-yl)-2-oxopropyl phosphate + H2O. It functions in the pathway amino-acid biosynthesis; L-histidine biosynthesis; L-histidine from 5-phospho-alpha-D-ribose 1-diphosphate: step 6/9. This is Imidazoleglycerol-phosphate dehydratase from Pyrobaculum arsenaticum (strain DSM 13514 / JCM 11321 / PZ6).